The primary structure comprises 194 residues: Flavin prenyltransferase UbiX (194 aa).

FMN-binding positions include 9–11 (GAS), S35, 86–89 (SIKT), and R121. The dimethylallyl phosphate site is built by Y151 and K167.

The protein belongs to the UbiX/PAD1 family.

The enzyme catalyses dimethylallyl phosphate + FMNH2 = prenylated FMNH2 + phosphate. In terms of biological role, involved in the carboxylation of phenylphosphate. Functionally, flavin prenyltransferase that catalyzes the synthesis of the prenylated FMN cofactor (prenyl-FMN) for 4-hydroxy-3-polyprenylbenzoic acid decarboxylase UbiD. The prenyltransferase is metal-independent and links a dimethylallyl moiety from dimethylallyl monophosphate (DMAP) to the flavin N5 and C6 atoms of FMN. The protein is Flavin prenyltransferase UbiX of Thauera aromatica.